We begin with the raw amino-acid sequence, 658 residues long: MSLPPEKASELKQLIHQQLSKMDVHGRIREILAETIREELAPDQHLSTEDLIKALRRRGIIDDVMKELNFVTDSVERELPSSPKQPICFDRQSTLKKTNIDPTRRYLYLQVLGGKAFLEHLQEPEPLPGQVCSTFTLCLHYRNQRFRSKPVPCACEPDFHDGFLLEVHRESLGDGTRMADSTTMLSISDPIHMVLIKTDIFGETTLVASYFLEWRSVLGSENGVTSLTVELMGVGTESKVSVGILNIKLEMYPPLNQTLSQEVVNTQLALERQKTAEKERLFLVYAKQWWREYLQIRPSHNSRLVKIFAQDENGVNRPVCSYVKPLRAGRLLDTPRQAARFVNVLGYERAPVIGGGGKQEQWCTLLAFLCRNKGDCEDHANLLCSLLLGYGLEAFVCVGTKAKGVPHAWVMTCGTDGTTTFWESLTGHRYIHKPTNPDEPPVAEQPKPLYPYRTIGCVFNHQMFLGNCQPSDAVETCVFDLNDESKWKPMSEEAIKSVCAPGATTSLPPFPPLCASTIDASVTSNEIEMQLRLLVSEHRKDLGLTTVWEDQLSYLLSPALASYEFERTTSISAGNEEFQDAIRRAVPDGHTFKGFPIHFVYRNARRAFATCLRSPFCEEIICCRGDQVRLAVRVRVFTYPESACAVWIMFACKYRSVL.

Phosphoserine occurs at positions 74 and 82.

Belongs to the CEP76 family. Interacts with CCP110 and CEP97.

The protein localises to the cytoplasm. The protein resides in the cytoskeleton. Its subcellular location is the microtubule organizing center. It localises to the centrosome. It is found in the centriole. Functionally, centrosomal protein involved in regulation of centriole duplication. Required to limit centriole duplication to once per cell cycle by preventing centriole reduplication. The sequence is that of Centrosomal protein of 76 kDa (CEP76) from Pongo abelii (Sumatran orangutan).